The primary structure comprises 609 residues: Ataxin-10 homolog (609 aa).

Disordered stretches follow at residues 265 to 293 (KSTTESTTESTTTESTDSTTDSTTTTTTG), 405 to 426 (KQQEGEEDPVNQILNDPFSKDS), and 461 to 490 (SDTNKSSSSSSSSSSSTTTDGETVTSKGFN). Positions 266–292 (STTESTTESTTTESTDSTTDSTTTTTT) are enriched in low complexity. The span at 466–479 (SSSSSSSSSSSTTT) shows a compositional bias: low complexity. Residues 480-490 (DGETVTSKGFN) show a composition bias toward polar residues.

It belongs to the ATXN10 family.

May play a role in the regulation of cytokinesis. This chain is Ataxin-10 homolog (atxn10), found in Dictyostelium discoideum (Social amoeba).